Here is a 338-residue protein sequence, read N- to C-terminus: Cilia- and flagella-associated protein 36 (338 aa).

Residues 142–179 (ISDLEQEEMKLVSEALRLSKEEYEREQLRRSAKELNCT) adopt a coiled-coil conformation. 2 disordered regions span residues 175–220 (ELNC…ESPY) and 281–314 (KKQE…KKSL). Residues 187 to 202 (KQSNGSERTPSNTELP) are compositionally biased toward polar residues. Positions 255 to 330 (NLSQAEKEQL…AEKLKEEVIL (76 aa)) form a coiled coil.

The protein belongs to the CFAP36 family.

Its subcellular location is the nucleus. It localises to the cytoplasm. It is found in the cell projection. The protein resides in the cilium. The protein localises to the flagellum. This chain is Cilia- and flagella-associated protein 36, found in Xenopus laevis (African clawed frog).